The sequence spans 199 residues: uncharacterized protein (199 aa).

A coiled-coil region spans residues 71–104 (RANATNKLTVIAEQIQHLQEQARKVLEDARRDAD).

This is an uncharacterized protein from Mus musculus (Mouse).